The chain runs to 346 residues: Glucose-6-phosphatase 3 (346 aa).

At 1 to 25 (MESTLSAGIMMAEALQNQLPGLENM) the chain is on the lumenal side. Residues 26–46 (WLWVTFLADPKNLFQFYFPAV) form a helical membrane-spanning segment. Topologically, residues 47–56 (YYASRRLGIS) are cytoplasmic. A helical membrane pass occupies residues 57–77 (LFWIAFITEWLNLVFKWFLFG). Residues 78 to 115 (DRPFWWVHESGYSAQTPVQIHQFPSSCETGPGSPSGHC) lie on the Lumenal side of the membrane. Arg79 provides a ligand contact to substrate. The active-site Proton donor is His114. A helical membrane pass occupies residues 116 to 135 (MITGAALWPVMIAISSQVAS). The Cytoplasmic segment spans residues 136 to 140 (QTRSP). Residues 141–162 (WVRVIPGLAYCTFLLAVGLSRV) form a helical membrane-spanning segment. A substrate-binding site is contributed by Arg161. Over 163 to 167 (FLLAH) the chain is Lumenal. The active-site Nucleophile is the His167. The chain crosses the membrane as a helical span at residues 168 to 186 (FPHQVLAGLLAGVILGWLL). Residues 187–197 (SPRVPMERELS) lie on the Cytoplasmic side of the membrane. A helical transmembrane segment spans residues 198 to 218 (FYGLTALTLMLGASLMYWTLF). Residues 219 to 254 (TLGLDLSWSINLASKWCDRPEWVLVDSRPFASLSRD) are Lumenal-facing. A helical membrane pass occupies residues 255–273 (SGSALGLGIALHTPCYAQI). The Cytoplasmic portion of the chain corresponds to 274 to 283 (RRVHLGNGQK). The helical transmembrane segment at 284–304 (IACFVLAMGLLVFLEWLGHPP) threads the bilayer. Over 305-307 (QIS) the chain is Lumenal. Residues 308–328 (LFYIFNFLKFTLWPCLVVALV) form a helical membrane-spanning segment. Residues 329 to 346 (PWMVHTLSAQEAPPIRSS) are Cytoplasmic-facing.

The protein belongs to the glucose-6-phosphatase family. As to expression, expressed in liver and kidney. It is the major glucose-6-phosphatase expressed in the small intestine.

It is found in the endoplasmic reticulum membrane. The enzyme catalyses D-glucose 6-phosphate + H2O = D-glucose + phosphate. It participates in carbohydrate biosynthesis; gluconeogenesis. With respect to regulation, inhibited by vanadate. Functionally, hydrolyzes glucose-6-phosphate to glucose in the endoplasmic reticulum. May form with the glucose-6-phosphate transporter (SLC37A4/G6PT) a ubiquitously expressed complex responsible for glucose production through glycogenolysis and gluconeogenesis. Probably required for normal neutrophil function. The protein is Glucose-6-phosphatase 3 (G6pc3) of Rattus norvegicus (Rat).